The sequence spans 178 residues: NADH-quinone oxidoreductase subunit B 1 (178 aa).

4 residues coordinate [4Fe-4S] cluster: C39, C40, C104, and C135.

It belongs to the complex I 20 kDa subunit family. As to quaternary structure, NDH-1 is composed of 14 different subunits. Subunits NuoB, C, D, E, F, and G constitute the peripheral sector of the complex. [4Fe-4S] cluster is required as a cofactor.

The protein resides in the cell inner membrane. It carries out the reaction a quinone + NADH + 5 H(+)(in) = a quinol + NAD(+) + 4 H(+)(out). Its function is as follows. NDH-1 shuttles electrons from NADH, via FMN and iron-sulfur (Fe-S) centers, to quinones in the respiratory chain. The immediate electron acceptor for the enzyme in this species is believed to be a menaquinone. Couples the redox reaction to proton translocation (for every two electrons transferred, four hydrogen ions are translocated across the cytoplasmic membrane), and thus conserves the redox energy in a proton gradient. This chain is NADH-quinone oxidoreductase subunit B 1, found in Cytophaga hutchinsonii (strain ATCC 33406 / DSM 1761 / CIP 103989 / NBRC 15051 / NCIMB 9469 / D465).